The chain runs to 164 residues: Large ribosomal subunit protein bL9 (164 aa).

This sequence belongs to the bacterial ribosomal protein bL9 family.

Its function is as follows. Binds to the 23S rRNA. In Borrelia hermsii (strain HS1 / DAH), this protein is Large ribosomal subunit protein bL9.